The chain runs to 297 residues: Large ribosomal subunit protein uL3 (297 aa).

Disordered stretches follow at residues 124–143 (NQKI…PVRQ) and 258–297 (MKEK…DKGE).

Belongs to the universal ribosomal protein uL3 family. Part of the 50S ribosomal subunit. Forms a cluster with proteins L14 and L19.

Functionally, one of the primary rRNA binding proteins, it binds directly near the 3'-end of the 23S rRNA, where it nucleates assembly of the 50S subunit. The sequence is that of Large ribosomal subunit protein uL3 from Mycoplasma mobile (strain ATCC 43663 / 163K / NCTC 11711) (Mesomycoplasma mobile).